We begin with the raw amino-acid sequence, 113 residues long: AYACSFPPSEIPGSKECLAEALQKHQGFKKKSYALICAYLNYKEDAENYERAAEDFDSAVKCTGCKEGVDLHEGNPELIEEGFEKFLASLKIDRKALGSLCTLFQKLYAIPHN.

Tyrosine 2 bears the 2',4',5'-topaquinone mark. Positions 2–31 form a cross-link, lysine tyrosylquinone (Tyr-Lys); it reads YACSFPPSEIPGSKECLAEALQKHQGFKKK. 3 disulfides stabilise this stretch: cysteine 4/cysteine 62, cysteine 17/cysteine 65, and cysteine 37/cysteine 101. An Aminomalonic acid (Ser); in chain B modification is found at serine 9. The segment at residues 17–65 is a cross-link (S-cysteinyl 3-(oxidosulfanyl)alanine (Cys-Cys); in chain B); the sequence is CLAEALQKHQGFKKKSYALICAYLNYKEDAENYERAAEDFDSAVKCTGC. The lysine tyrosylquinone (Lys-Tyr) cross-link spans 30–108; the sequence is KKSYALICAY…SLCTLFQKLY (79 aa). Cysteine sulfenic acid (-SOH); in chain B is present on cysteine 65. Position 108 is a 2',4',5'-topaquinone (tyrosine 108). The Zn(2+) site is built by tyrosine 108 and histidine 112. Tyrosine 108 is covalently cross-linked (5'-tyrosyl-5'-aminotyrosine (Tyr-Tyr) (interchain with Y-108)).

As to quaternary structure, homodimer. The two chains, designated A and B, differ in their modifications, but not, it is thought, in their sequence. Zn(2+) is required as a cofactor. As to expression, foam nest.

The protein localises to the secreted. The chain is Ranasmurfin from Polypedates leucomystax (Common tree frog).